The sequence spans 187 residues: MTASASKTAQQLKYIKDSIKTIPDYPKAGILFRDVTSLLENPKAYSASIELLSEHYSESGVTKVVGTEARGFLFGAPVALALGVGFVPVRKPGKLPRETISESYELEYGTDTLEIHTDSIQPGDKVLVVDDLLATGGTIEATVKLIRRLGGEVVHAAFIINLPELGGEARLTQQGIHCYSLVSFDGH.

The protein belongs to the purine/pyrimidine phosphoribosyltransferase family. Homodimer.

Its subcellular location is the cytoplasm. The enzyme catalyses AMP + diphosphate = 5-phospho-alpha-D-ribose 1-diphosphate + adenine. Its pathway is purine metabolism; AMP biosynthesis via salvage pathway; AMP from adenine: step 1/1. Its function is as follows. Catalyzes a salvage reaction resulting in the formation of AMP, that is energically less costly than de novo synthesis. This Yersinia pseudotuberculosis serotype O:3 (strain YPIII) protein is Adenine phosphoribosyltransferase.